The following is a 36-amino-acid chain: Probable non-specific lipid-transfer protein (36 aa).

The protein belongs to the plant LTP family. Phosphorylated by Ca(2+)-dependent protein kinase.

In terms of biological role, plant non-specific lipid-transfer proteins transfer phospholipids as well as galactolipids across membranes. May play a role in wax or cutin deposition in the cell walls of expanding epidermal cells and certain secretory tissues. This is Probable non-specific lipid-transfer protein from Pinus pinea (Italian stone pine).